A 212-amino-acid chain; its full sequence is Pyridoxine/pyridoxamine 5'-phosphate oxidase (212 aa).

Residues 8–11 (RREY) and K66 contribute to the substrate site. Residues 61-66 (RIVLLK), 76-77 (FT), R82, K83, and Q105 contribute to the FMN site. Y123, R127, and S131 together coordinate substrate. FMN is bound by residues 140–141 (QS) and W185. 191 to 193 (RLH) is a binding site for substrate. R195 provides a ligand contact to FMN.

Belongs to the pyridoxamine 5'-phosphate oxidase family. Homodimer. It depends on FMN as a cofactor.

It catalyses the reaction pyridoxamine 5'-phosphate + O2 + H2O = pyridoxal 5'-phosphate + H2O2 + NH4(+). It carries out the reaction pyridoxine 5'-phosphate + O2 = pyridoxal 5'-phosphate + H2O2. It functions in the pathway cofactor metabolism; pyridoxal 5'-phosphate salvage; pyridoxal 5'-phosphate from pyridoxamine 5'-phosphate: step 1/1. Its pathway is cofactor metabolism; pyridoxal 5'-phosphate salvage; pyridoxal 5'-phosphate from pyridoxine 5'-phosphate: step 1/1. Functionally, catalyzes the oxidation of either pyridoxine 5'-phosphate (PNP) or pyridoxamine 5'-phosphate (PMP) into pyridoxal 5'-phosphate (PLP). The sequence is that of Pyridoxine/pyridoxamine 5'-phosphate oxidase from Shewanella pealeana (strain ATCC 700345 / ANG-SQ1).